The sequence spans 274 residues: Penicillin-insensitive murein endopeptidase (274 aa).

An N-terminal signal peptide occupies residues 1 to 19 (MNKTAIALLALLASSASLA). 3 disulfides stabilise this stretch: Cys44–Cys265, Cys187–Cys235, and Cys216–Cys223. The Zn(2+) site is built by His110, His113, Asp120, Asp147, His150, and His211. The interval 227 to 274 (PLPPPGDGCGAELQSWFEPPKPGTTKPEKKTPPPLPPSCQALLDEHVI) is disordered.

This sequence belongs to the peptidase M74 family. In terms of assembly, dimer. Zn(2+) is required as a cofactor.

It localises to the periplasm. Murein endopeptidase that cleaves the D-alanyl-meso-2,6-diamino-pimelyl amide bond that connects peptidoglycan strands. Likely plays a role in the removal of murein from the sacculus. This is Penicillin-insensitive murein endopeptidase from Escherichia coli (strain SE11).